A 485-amino-acid chain; its full sequence is PTS system arbutin-, cellobiose-, and salicin-specific EIIBC component (485 aa).

Residues 1–88 (MAKNYAALAR…VSLLPGDMQP (88 aa)) form the PTS EIIB type-1 domain. The Phosphocysteine intermediate; for EIIB activity role is filled by Cys28. 10 helical membrane passes run 102 to 122 (IGAG…PAII), 147 to 167 (LTIL…MVAA), 177 to 197 (MSLA…ELMA), 207 to 227 (FALI…ALVM), 254 to 274 (LIVL…GIWI), 285 to 305 (IHGY…PLLV), 330 to 350 (VMPS…AVAW), 363 to 383 (AAAA…GVAI), 389 to 409 (LIAS…AGLA), and 433 to 453 (IVWV…LTLL). The 363-residue stretch at 108–470 (DALIGTMSPL…VEEAAAQARK (363 aa)) folds into the PTS EIIC type-1 domain.

The protein localises to the cell inner membrane. Its function is as follows. The phosphoenolpyruvate-dependent sugar phosphotransferase system (sugar PTS), a major carbohydrate active -transport system, catalyzes the phosphorylation of incoming sugar substrates concomitantly with their translocation across the cell membrane. This system is involved in arbutin, cellobiose, and salicin transport. In Escherichia coli (strain K12), this protein is PTS system arbutin-, cellobiose-, and salicin-specific EIIBC component (ascF).